Reading from the N-terminus, the 350-residue chain is GTPase Obg (350 aa).

Positions 1–159 (MKLVDEAEIE…RTLKLELKLL (159 aa)) constitute an Obg domain. A disordered region spans residues 127 to 147 (NMHFKSSTNRSPRQALPGEPG). One can recognise an OBG-type G domain in the interval 160 to 337 (ADVGLLGFPN…IMSRIMAFFD (178 aa)). GTP is bound by residues 166-173 (GFPNAGKS), 191-195 (FTTLY), 213-216 (DIPG), 287-290 (NKAD), and 318-320 (SAL). Ser173 and Thr193 together coordinate Mg(2+).

Belongs to the TRAFAC class OBG-HflX-like GTPase superfamily. OBG GTPase family. As to quaternary structure, monomer. Requires Mg(2+) as cofactor.

The protein resides in the cytoplasm. An essential GTPase which binds GTP, GDP and possibly (p)ppGpp with moderate affinity, with high nucleotide exchange rates and a fairly low GTP hydrolysis rate. Plays a role in control of the cell cycle, stress response, ribosome biogenesis and in those bacteria that undergo differentiation, in morphogenesis control. This chain is GTPase Obg, found in Stenotrophomonas maltophilia (strain R551-3).